The primary structure comprises 423 residues: F-box/LRR-repeat protein 2 (423 aa).

Positions 9 to 55 constitute an F-box domain; the sequence is GRINKKLPKELLLRIFSFLDIVTLCRCAQISKAWNILALDGSNWQRI. 13 LRR repeats span residues 61–87, 88–113, 114–139, 140–165, 166–191, 192–217, 218–243, 244–269, 270–295, 296–321, 322–350, 351–375, and 376–401; these read QTDV…SLRG, CIGV…NLNG, CTKI…DLTS, CVSI…NLSW, CDQI…LLRG, CTQL…NLQS, CSRI…CLSG, CSNL…EAAR, CSHL…DLEE, CILI…SLSH, CELI…ELDN, CLLI…ELYD, and CQQV…AYFA. Residues 80 to 90 form an interaction with Calmodulin region; the sequence is LRKLSLRGCIG. Lys-201 is covalently cross-linked (Glycyl lysine isopeptide (Lys-Gly) (interchain with G-Cter in ubiquitin)). Thr-404 bears the Phosphothreonine mark. Cys-420 is lipidated: S-geranylgeranyl cysteine. Residues 420-423 carry the CAAX motif motif; sequence CVIL.

As to quaternary structure, part of the SCF (SKP1-CUL1-F-box) E3 ubiquitin-protein ligase complex SCF(FBXL2) composed of CUL1, SKP1, RBX1 and FBXL2. Interacts with calmodulin; may antagonize substrate ubiquitination by SCF(FBXL2). May interact with PIK3R1. Interacts with PTPN13. Phosphorylated by GSK-beta (GSK3B), promoting recognition by FBXO3, leading to its ubiquitination by the SCF(FBXO3) complex. In terms of processing, ubiquitinated at Lys-201 by the SCF(FBXO3) complex in response to lipopolysaccharide (LPS), leading to its degradation by the proteasome.

It is found in the membrane. It functions in the pathway protein modification; protein ubiquitination. Functionally, calcium-activated substrate recognition component of the SCF (SKP1-cullin-F-box protein) E3 ubiquitin-protein ligase complex, SCF(FBXL2), which mediates the ubiquitination and subsequent proteasomal degradation of target proteins. Unlike many F-box proteins, FBXL2 does not seem to target phosphodegron within its substrates but rather calmodulin-binding motifs and is thereby antagonized by calmodulin. This is the case for the cyclins CCND2 and CCND3 which polyubiquitination and subsequent degradation are inhibited by calmodulin. Through CCND2 and CCND3 degradation induces cell-cycle arrest in G(0). SCF(FBXL2) also mediates PIK3R2 ubiquitination and proteasomal degradation thereby regulating phosphatidylinositol 3-kinase signaling and autophagy. PCYT1A monoubiquitination by SCF(FBXL2) and subsequent degradation regulates synthesis of phosphatidylcholine, which is utilized for formation of membranes and of pulmonary surfactant. The SCF(FBXL2) complex acts as a regulator of inflammation by mediating ubiquitination and degradation of TRAF proteins (TRAF1, TRAF2, TRAF3, TRAF4, TRAF5 and TRAF6). The SCF(FBXL2) complex acts as a negative regulator of the NLRP3 inflammasome by mediating ubiquitination and degradation of NLRP3. This is F-box/LRR-repeat protein 2 from Pongo abelii (Sumatran orangutan).